We begin with the raw amino-acid sequence, 750 residues long: Neprilysin (750 aa).

Glycine 2 carries the N-myristoyl glycine lipid modification. Residues glycine 2–glutamate 28 lie on the Cytoplasmic side of the membrane. 2 positions are modified to phosphoserine: serine 4 and serine 6. Residues proline 16–arginine 23 carry the Stop-transfer sequence motif. A helical; Signal-anchor for type II membrane protein membrane pass occupies residues isoleucine 29–threonine 51. Residues tyrosine 52–tryptophan 750 are Extracellular-facing. The Peptidase M13 domain occupies isoleucine 56 to tryptophan 750. Disulfide bonds link cysteine 57–cysteine 62, cysteine 80–cysteine 735, cysteine 88–cysteine 695, cysteine 143–cysteine 411, cysteine 234–cysteine 242, and cysteine 621–cysteine 747. Arginine 103 serves as a coordination point for a peptide. Asparagine 145 and asparagine 211 each carry an N-linked (GlcNAc...) asparagine glycan. Asparagine 285, asparagine 311, and asparagine 325 each carry an N-linked (GlcNAc...) asparagine glycan. Position 584 (histidine 584) interacts with Zn(2+). Residue glutamate 585 is part of the active site. Residue histidine 588 participates in Zn(2+) binding. The N-linked (GlcNAc...) asparagine glycan is linked to asparagine 628. Glutamate 647 is a Zn(2+) binding site. Aspartate 651 acts as the Proton donor in catalysis.

The protein belongs to the peptidase M13 family. Requires Zn(2+) as cofactor. In terms of processing, myristoylation is a determinant of membrane targeting. Post-translationally, glycosylation at Asn-628 is necessary both for surface expression and neutral endopeptidase activity.

It is found in the cell membrane. It carries out the reaction Preferential cleavage of polypeptides between hydrophobic residues, particularly with Phe or Tyr at P1'.. It catalyses the reaction substance P + H2O = substance P(1-9) + L-Leu-L-Met-NH2. The enzyme catalyses substance P + H2O = substance P(1-7) + L-Phe-Gly-L-Leu-L-Met-NH2. The catalysed reaction is neurotensin + H2O = neurotensin(1-11) + L-isoleucyl-L-leucine. It carries out the reaction neurotensin + H2O = neurotensin(1-10) + L-tyrosyl-L-isoleucyl-L-leucine. In terms of biological role, thermolysin-like specificity, but is almost confined on acting on polypeptides of up to 30 amino acids. Biologically important in the destruction of opioid peptides such as Met- and Leu-enkephalins by cleavage of a Gly-Phe bond. Catalyzes cleavage of bradykinin, substance P and neurotensin peptides. Able to cleave angiotensin-1, angiotensin-2 and angiotensin 1-9. Involved in the degradation of the atrial natriuretic factor (ANF). Displays UV-inducible elastase activity toward skin preelastic and elastic fibers. The protein is Neprilysin of Mus musculus (Mouse).